A 444-amino-acid polypeptide reads, in one-letter code: tRNA-2-methylthio-N(6)-dimethylallyladenosine synthase (444 aa).

One can recognise an MTTase N-terminal domain in the interval 2 to 119 (KKVYIKTFGC…LPDLIESRKQ (118 aa)). [4Fe-4S] cluster-binding residues include Cys-11, Cys-48, Cys-82, Cys-156, Cys-160, and Cys-163. Residues 142 to 374 (KVDGGAAFVS…NEVIEAKGYA (233 aa)) form the Radical SAM core domain. In terms of domain architecture, TRAM spans 377 to 440 (QSMVGTVQRV…PHSLAGEALT (64 aa)).

It belongs to the methylthiotransferase family. MiaB subfamily. As to quaternary structure, monomer. [4Fe-4S] cluster is required as a cofactor.

It localises to the cytoplasm. It carries out the reaction N(6)-dimethylallyladenosine(37) in tRNA + (sulfur carrier)-SH + AH2 + 2 S-adenosyl-L-methionine = 2-methylsulfanyl-N(6)-dimethylallyladenosine(37) in tRNA + (sulfur carrier)-H + 5'-deoxyadenosine + L-methionine + A + S-adenosyl-L-homocysteine + 2 H(+). Functionally, catalyzes the methylthiolation of N6-(dimethylallyl)adenosine (i(6)A), leading to the formation of 2-methylthio-N6-(dimethylallyl)adenosine (ms(2)i(6)A) at position 37 in tRNAs that read codons beginning with uridine. The protein is tRNA-2-methylthio-N(6)-dimethylallyladenosine synthase of Chromobacterium violaceum (strain ATCC 12472 / DSM 30191 / JCM 1249 / CCUG 213 / NBRC 12614 / NCIMB 9131 / NCTC 9757 / MK).